The following is a 155-amino-acid chain: NADPH-dependent 7-cyano-7-deazaguanine reductase (155 aa).

The active-site Thioimide intermediate is Cys-52. The Proton donor role is filled by Asp-59. Residues 74 to 76 (VES) and 93 to 94 (HE) each bind substrate.

This sequence belongs to the GTP cyclohydrolase I family. QueF type 1 subfamily.

It localises to the cytoplasm. The catalysed reaction is 7-aminomethyl-7-carbaguanine + 2 NADP(+) = 7-cyano-7-deazaguanine + 2 NADPH + 3 H(+). The protein operates within tRNA modification; tRNA-queuosine biosynthesis. Catalyzes the NADPH-dependent reduction of 7-cyano-7-deazaguanine (preQ0) to 7-aminomethyl-7-deazaguanine (preQ1). The sequence is that of NADPH-dependent 7-cyano-7-deazaguanine reductase from Syntrophobacter fumaroxidans (strain DSM 10017 / MPOB).